A 204-amino-acid polypeptide reads, in one-letter code: uncharacterized protein (204 aa).

Positions 1-17 (MKRLVTGLLALSLFLAA) are cleaved as a signal peptide. The interval 17–100 (ACGQDSDQQK…NNNQANNNQK (84 aa)) is disordered. Cys18 carries N-palmitoyl cysteine lipidation. Cys18 carries the S-diacylglycerol cysteine lipid modification. The span at 23–70 (DQQKDGNKEKDDKAKTEQQDKKTNDSSKDKKDNKDDSKDVNKDNKDNS) shows a compositional bias: basic and acidic residues. Over residues 71-100 (ANDNQQQSNSNATNNDQNQTNNNQANNNQK) the composition is skewed to low complexity.

It is found in the cell membrane. This is an uncharacterized protein from Staphylococcus aureus (strain MSSA476).